The following is a 261-amino-acid chain: Pantothenate synthetase (261 aa).

Residue 29–36 coordinates ATP; the sequence is MGALHNGH. Histidine 36 (proton donor) is an active-site residue. Glutamine 60 lines the (R)-pantoate pocket. Position 60 (glutamine 60) interacts with beta-alanine. 147 to 150 is a binding site for ATP; it reads GEKD. Glutamine 153 contacts (R)-pantoate. ATP is bound at residue 184–187; it reads LSSR.

The protein belongs to the pantothenate synthetase family. As to quaternary structure, homodimer.

It is found in the cytoplasm. The catalysed reaction is (R)-pantoate + beta-alanine + ATP = (R)-pantothenate + AMP + diphosphate + H(+). Its pathway is cofactor biosynthesis; (R)-pantothenate biosynthesis; (R)-pantothenate from (R)-pantoate and beta-alanine: step 1/1. Functionally, catalyzes the condensation of pantoate with beta-alanine in an ATP-dependent reaction via a pantoyl-adenylate intermediate. The polypeptide is Pantothenate synthetase (Francisella tularensis subsp. mediasiatica (strain FSC147)).